Consider the following 396-residue polypeptide: MEDDDRPRKYPKLNHDEVQEGSEPVMTGAVGAVHDDDAESADSDNRASPSNDRIDNDVKQACDEEGQDAHGKDGPPTLSKNQLKKLKRKEHWEAMREQRKVKRKEKLVAKRERRRAALEQAKQEGAEATEETRKAFESTQKKFQRSTLLPVTLVLDCSYDDLMLDKERVSLGAQITRSYSDNSRAPFRSHLVVSSFNKLLKERFDTVLGKTHENWKGVRFLQEDFAEAAEMAKEWMQGPKGGQLAGVFADKADAKPEDGEIVYLSSDSPNILTELKPYSTYIIGGLVDKNRHKGICYKSAVAKGIKTAKLPIGEYIQMAHRQVLATNHVVEIMIRWLELGDWGKAFIQVIPQRKGGKLKSADHESEDQTPRESVEAVEAEPDGEGAAAEAGEGGKE.

Composition is skewed to basic and acidic residues over residues 1–18 (MEDD…HDEV) and 52–73 (DRID…HGKD). Positions 1 to 109 (MEDDDRPRKY…KVKRKEKLVA (109 aa)) are disordered. One can recognise an SAM-dependent MTase TRM10-type domain in the interval 139-357 (TQKKFQRSTL…QVIPQRKGGK (219 aa)). S-adenosyl-L-methionine contacts are provided by residues 264-265 (LS), G284, 288-292 (DKNRH), C296, L310, and 322-324 (QVL). The active-site Proton acceptor is the D288. Residues 354-396 (KGGKLKSADHESEDQTPRESVEAVEAEPDGEGAAAEAGEGGKE) are disordered. Positions 359–374 (KSADHESEDQTPRESV) are enriched in basic and acidic residues.

Belongs to the class IV-like SAM-binding methyltransferase superfamily. TRM10 family. As to quaternary structure, monomer.

Its subcellular location is the cytoplasm. The protein localises to the nucleus. The enzyme catalyses guanosine(9) in tRNA + S-adenosyl-L-methionine = N(1)-methylguanosine(9) in tRNA + S-adenosyl-L-homocysteine + H(+). Functionally, S-adenosyl-L-methionine-dependent guanine N(1)-methyltransferase that catalyzes the formation of N(1)-methylguanine at position 9 (m1G9) in cytoplasmic tRNA. The protein is tRNA (guanine(9)-N1)-methyltransferase of Aspergillus fumigatus (strain ATCC MYA-4609 / CBS 101355 / FGSC A1100 / Af293) (Neosartorya fumigata).